Here is a 329-residue protein sequence, read N- to C-terminus: Serine, glycine and glutamine-rich protein (329 aa).

The N-terminal stretch at 1-16 (MKTVLLFVVLVGLAYC) is a signal peptide. The span at 38 to 48 (SSSSSSSSSSS) shows a compositional bias: low complexity. The segment at 38–80 (SSSSSSSSSSSSGGGGSSGGGASGGGGGSSSGGGGASGGGGGG) is disordered. Residues 49-80 (SGGGGSSGGGASGGGGGSSSGGGGASGGGGGG) are compositionally biased toward gly residues.

In terms of tissue distribution, prismatic layer of shell (at protein level). Expressed primarily in the mantle with highest level in the mantle edge and lower level in the mantle pallium.

The protein localises to the secreted. The protein is Serine, glycine and glutamine-rich protein of Pinctada maxima (Silver-lipped pearl oyster).